The primary structure comprises 1756 residues: Protein TIC 214 (1756 aa).

6 helical membrane-spanning segments follow: residues 18–38, 54–74, 79–99, 128–148, 163–183, and 210–230; these read VSGPIIIFGLYYGFLATLPFG, GYGIIAISGSITGQLIGFLSM, IYAALWKPYAITLLVVPYMFF, LFMDGLILQLLNPILLANPVL, ISFMISGLCGWLGGHILLTIF, and FSLLILCYCSFYLGRAPLPFL. The tract at residues 1469-1504 is disordered; that stretch reads KNKQVEDGQDKNGQVEDQDGQDQDGQVEDQQTDGKK. The segment covering 1471–1482 has biased composition (basic and acidic residues); the sequence is KQVEDGQDKNGQ. Residues 1484–1499 show a composition bias toward acidic residues; it reads EDQDGQDQDGQVEDQQ.

It belongs to the TIC214 family. Part of the Tic complex.

The protein localises to the plastid. The protein resides in the chloroplast inner membrane. Involved in protein precursor import into chloroplasts. May be part of an intermediate translocation complex acting as a protein-conducting channel at the inner envelope. This Pinus thunbergii (Japanese black pine) protein is Protein TIC 214.